The following is a 780-amino-acid chain: B3 domain-containing transcription repressor VAL2 (780 aa).

The TF-B3 DNA-binding region spans 286 to 387; the sequence is FEKVLSASDA…KLVMGYRKAT (102 aa). The CW-type zinc-finger motif lies at 515 to 565; the sequence is TGEQEQWVQCDACGKWRQLPVDILLPPKWSCSDNLLDPGRSSCSAPDELSP. 4 residues coordinate Zn(2+): Cys-524, Cys-527, Cys-545, and Cys-557. Disordered stretches follow at residues 577–608, 669–695, and 743–780; these read EFKR…AGIT, KRNK…TEVE, and NTAG…DPVN. A compositionally biased stretch (polar residues) spans 584 to 603; the sequence is ASSNEKLNQSQDASALNSLG. The segment covering 674-686 has biased composition (low complexity); it reads EAGQASQQAQSQS. Positions 743–765 are enriched in polar residues; that stretch reads NTAGEQQSSDMVSTEHGSSSAAQ.

It localises to the nucleus. Transcriptional repressor of gene expression involved in embryonic pathways, such as LEC1, ABI3, and FUS3. Repressor of the sugar-inducible genes involved in the seed maturation program in seedlings. Plays an essential role in regulating the transition from seed maturation to seedling growth. Functionally redundant with VAL1/HSI2. This Arabidopsis thaliana (Mouse-ear cress) protein is B3 domain-containing transcription repressor VAL2 (VAL2).